The chain runs to 407 residues: Argininosuccinate synthase (407 aa).

Residues 12 to 20 and A39 each bind ATP; that span reads AFSGGLDTS. 2 residues coordinate L-citrulline: Y90 and S95. G120 is a binding site for ATP. Residues T122, N126, and D127 each coordinate L-aspartate. Residue N126 participates in L-citrulline binding. 5 residues coordinate L-citrulline: R130, S181, S190, E266, and Y278.

It belongs to the argininosuccinate synthase family. Type 1 subfamily. Homotetramer.

The protein localises to the cytoplasm. It carries out the reaction L-citrulline + L-aspartate + ATP = 2-(N(omega)-L-arginino)succinate + AMP + diphosphate + H(+). It functions in the pathway amino-acid biosynthesis; L-arginine biosynthesis; L-arginine from L-ornithine and carbamoyl phosphate: step 2/3. The sequence is that of Argininosuccinate synthase from Nitrosospira multiformis (strain ATCC 25196 / NCIMB 11849 / C 71).